We begin with the raw amino-acid sequence, 84 residues long: MIKLRLKRYGKKRAASYRIVAMNSRDRRDGRPLEELGYYNPITDETRLHVDAIAKRLKDGAQPTDTVRRILEKASLLEPAKAKA.

It belongs to the bacterial ribosomal protein bS16 family.

In Acaryochloris marina (strain MBIC 11017), this protein is Small ribosomal subunit protein bS16.